The sequence spans 224 residues: Lipoprotein-releasing system ATP-binding protein LolD (224 aa).

An ABC transporter domain is found at 6–224; the sequence is VRLRELRRSF…VVRLHEGVLE (219 aa). 42 to 49 contributes to the ATP binding site; the sequence is GPSGSGKS.

The protein belongs to the ABC transporter superfamily. Lipoprotein translocase (TC 3.A.1.125) family. In terms of assembly, the complex is composed of two ATP-binding proteins (LolD) and two transmembrane proteins (LolC and LolE).

It localises to the cell inner membrane. Functionally, part of the ABC transporter complex LolCDE involved in the translocation of mature outer membrane-directed lipoproteins, from the inner membrane to the periplasmic chaperone, LolA. Responsible for the formation of the LolA-lipoprotein complex in an ATP-dependent manner. The polypeptide is Lipoprotein-releasing system ATP-binding protein LolD (Novosphingobium aromaticivorans (strain ATCC 700278 / DSM 12444 / CCUG 56034 / CIP 105152 / NBRC 16084 / F199)).